Here is a 274-residue protein sequence, read N- to C-terminus: 3-methyl-2-oxobutanoate hydroxymethyltransferase (274 aa).

Residues Asp46 and Asp85 each contribute to the Mg(2+) site. 3-methyl-2-oxobutanoate contacts are provided by residues Asp46 to Ser47, Asp85, and Lys115. Residue Glu117 coordinates Mg(2+). Glu184 (proton acceptor) is an active-site residue.

This sequence belongs to the PanB family. In terms of assembly, homodecamer; pentamer of dimers. It depends on Mg(2+) as a cofactor.

It is found in the cytoplasm. It carries out the reaction 3-methyl-2-oxobutanoate + (6R)-5,10-methylene-5,6,7,8-tetrahydrofolate + H2O = 2-dehydropantoate + (6S)-5,6,7,8-tetrahydrofolate. The protein operates within cofactor biosynthesis; (R)-pantothenate biosynthesis; (R)-pantoate from 3-methyl-2-oxobutanoate: step 1/2. Functionally, catalyzes the reversible reaction in which hydroxymethyl group from 5,10-methylenetetrahydrofolate is transferred onto alpha-ketoisovalerate to form ketopantoate. The sequence is that of 3-methyl-2-oxobutanoate hydroxymethyltransferase from Thermoanaerobacter pseudethanolicus (strain ATCC 33223 / 39E) (Clostridium thermohydrosulfuricum).